A 174-amino-acid polypeptide reads, in one-letter code: uncharacterized protein (174 aa).

The signal sequence occupies residues 1–31; it reads MCCVYRMNRPASGLTVVFCGKLSGKPGPKSA. The disordered stretch occupies residues 39–59; sequence KSGADDGGENPRFFSAGPRTE.

This is an uncharacterized protein from Escherichia coli (strain K12).